The following is a 110-amino-acid chain: UPF0122 protein BCA_3946 (110 aa).

This sequence belongs to the UPF0122 family.

Might take part in the signal recognition particle (SRP) pathway. This is inferred from the conservation of its genetic proximity to ftsY/ffh. May be a regulatory protein. The polypeptide is UPF0122 protein BCA_3946 (Bacillus cereus (strain 03BB102)).